The chain runs to 263 residues: Gap junction beta-6 protein (263 aa).

Residues 1–19 are Cytoplasmic-facing; it reads MDWGALQTILGGVNKHSTS. Residues 20–40 traverse the membrane as a helical segment; it reads IGKIWLTVLFIFRIMILVVAA. Over 41-75 the chain is Extracellular; it reads ERVWGDEQDDFICNTLQPGCKNVCYDHFFPISHIR. A helical membrane pass occupies residues 76-96; it reads LWALQLIFVSTPALLVAMHVA. The Cytoplasmic portion of the chain corresponds to 97–137; sequence YRRHEKKRQFRKGDQKCEYKDIEEIRTQRFRIEGTLWWTYT. A helical transmembrane segment spans residues 138 to 158; it reads CSIFFRLVFEAVFMYAFYFMY. Residues 159-189 lie on the Extracellular side of the membrane; that stretch reads DGFRMPRLMKCSAWPCPNTVDCFVSRPTEKT. The helical transmembrane segment at 190–210 threads the bilayer; that stretch reads VFTIFMIAVSSICILLNVAEL. Topologically, residues 211 to 263 are cytoplasmic; that stretch reads CYLLTKFFLRRSRKAGNQKHHPNHENKEETKQNEMNELISDSCQNTVIGFTSS.

It belongs to the connexin family. Beta-type (group I) subfamily. A connexon is composed of a hexamer of connexins. As to expression, exclusively expressed in the cochlea of the inner ear, where it is found in cells of the tegmentum vasculosum, cuboidal cells, supporting cells and clear cells.

Its subcellular location is the cell membrane. The protein resides in the cell junction. The protein localises to the gap junction. In terms of biological role, one gap junction consists of a cluster of closely packed pairs of transmembrane channels, the connexons, through which materials of low MW diffuse from one cell to a neighboring cell. The polypeptide is Gap junction beta-6 protein (GJB6) (Gallus gallus (Chicken)).